A 58-amino-acid chain; its full sequence is Photosystem II reaction center protein K (58 aa).

A propeptide spanning residues 1 to 21 is cleaved from the precursor; the sequence is MTVSYSIYLENSLHFGDALLA. The chain crosses the membrane as a helical span at residues 29–49; the sequence is IFDPIVDVMPVIPVFFLLLAF.

It belongs to the PsbK family. In terms of assembly, PSII is composed of 1 copy each of membrane proteins PsbA, PsbB, PsbC, PsbD, PsbE, PsbF, PsbH, PsbI, PsbJ, PsbK, PsbL, PsbM, PsbT, PsbX, PsbY, PsbZ, Psb30/Ycf12, at least 3 peripheral proteins of the oxygen-evolving complex and a large number of cofactors. It forms dimeric complexes.

Its subcellular location is the plastid. The protein resides in the chloroplast thylakoid membrane. Its function is as follows. One of the components of the core complex of photosystem II (PSII). PSII is a light-driven water:plastoquinone oxidoreductase that uses light energy to abstract electrons from H(2)O, generating O(2) and a proton gradient subsequently used for ATP formation. It consists of a core antenna complex that captures photons, and an electron transfer chain that converts photonic excitation into a charge separation. The polypeptide is Photosystem II reaction center protein K (Adiantum capillus-veneris (Maidenhair fern)).